A 463-amino-acid polypeptide reads, in one-letter code: L-seryl-tRNA(Sec) selenium transferase (463 aa).

The residue at position 295 (lysine 295) is an N6-(pyridoxal phosphate)lysine.

It belongs to the SelA family. As to quaternary structure, homodecamer; pentamer of dimers. Binds only one seryl-tRNA(Sec) per dimer. Pyridoxal 5'-phosphate serves as cofactor.

The protein localises to the cytoplasm. The enzyme catalyses L-seryl-tRNA(Sec) + selenophosphate + H(+) = L-selenocysteinyl-tRNA(Sec) + phosphate. It participates in aminoacyl-tRNA biosynthesis; selenocysteinyl-tRNA(Sec) biosynthesis; selenocysteinyl-tRNA(Sec) from L-seryl-tRNA(Sec) (bacterial route): step 1/1. Converts seryl-tRNA(Sec) to selenocysteinyl-tRNA(Sec) required for selenoprotein biosynthesis. The protein is L-seryl-tRNA(Sec) selenium transferase of Shigella dysenteriae serotype 1 (strain Sd197).